The sequence spans 60 residues: Cytotoxin 8 (60 aa).

Intrachain disulfides connect Cys3–Cys21, Cys14–Cys38, Cys42–Cys53, and Cys54–Cys59.

It belongs to the three-finger toxin family. Short-chain subfamily. Type IA cytotoxin sub-subfamily. Monomer in solution; Homodimer and oligomer in the presence of negatively charged lipids forming a pore with a size ranging between 20 and 30 Angstroms. As to expression, expressed by the venom gland.

It is found in the secreted. The protein resides in the target cell membrane. Its function is as follows. Shows cytolytic activity on many different cells by forming pore in lipid membranes. In vivo, increases heart rate or kills the animal by cardiac arrest. In addition, it binds to heparin with high affinity, interacts with Kv channel-interacting protein 1 (KCNIP1) in a calcium-independent manner, and binds to integrin alpha-V/beta-3 (ITGAV/ITGB3) with moderate affinity. The chain is Cytotoxin 8 from Naja annulifera (Banded Egyptian cobra).